The sequence spans 295 residues: MTIKAPALNLPGLGADPLTQRIKEKEKKWKYKVAVLSGKGGVGKSTVAVNLTAALAKMGYFVGILDADIHGPNVAKMLGVEKEEIYAEKFDDGHFEMIPPMADFMGQVTPIKVMSMGMMVPEDQPIIWRGALVTKAIKQLLGDVKWGSLDFMIIDFPPGTGDEILTVVQSIQLDAAIIVTTPQEVALLDTGKAVNMMKKMEVPYIAVVENMSYLICPHCGNKIDIFGEGGGEKLAEKEGVDFLGKIPIDLKAREASDLGIPIVLYGDTPAAKAFMEIAEKLVNKLKEMKGDEKKE.

Residue 38-45 (GKGGVGKS) coordinates ATP.

Belongs to the Mrp/NBP35 ATP-binding proteins family. Homodimer.

Binds and transfers iron-sulfur (Fe-S) clusters to target apoproteins. Can hydrolyze ATP. This chain is Iron-sulfur cluster carrier protein, found in Pyrococcus abyssi (strain GE5 / Orsay).